The chain runs to 508 residues: MKETVAMLNQQYVMPNGLTPYAGVTAKSPWLASESEKRQRKICDSLETAIRRSGLQNGMTISFHHAFRGGDKVVNMVVAKLAEMGFRDLTLASSSLIDAHWPLIEHIKNGVIRQIYTSGLRGKLGEEISAGLMENPVQIHSHGGRVQLIQSGELSIDVAFLGVPCCDEFGNANGFSGKSRCGSLGYARVDAEHAKCVVLLTEEWVDYPNYPASIAQDQVDLIVQVDEVGDPQKITAGAIRLTSNPRELLIARQAAKVVEHSGYFKEGFSLQTGTGGASLAVTRFLEDKMRRNGITASFGLGGITGTMVDLHEKGLIKTLLDTQSFDGDAARSLAQNPNHVEISTNQYASPGSKGASCERLNVVMLSALEIDIDFNVNVMTGSNGVLRGASGGHSDTAAGADLTIITAPLVRGRIPCVVEKVLTRVTPGASVDVLVTDHGIAVNPARQDLIDNLRSAGIPLMTIEELQQRAELLTGKPQPIEFTDRVVAVVRYRDGSVIDVIRQVKNSD.

Oligomer with a subunit composition of (alpha,beta,gamma)6.

Its subcellular location is the cytoplasm. It catalyses the reaction citrate = oxaloacetate + acetate. The enzyme catalyses citrate + acetyl-CoA = (3S)-citryl-CoA + acetate. In terms of biological role, represents a citrate:acetyl-ACP transferase. The polypeptide is Citrate lyase alpha chain (citF) (Klebsiella pneumoniae).